Consider the following 540-residue polypeptide: Anti-sigma-I factor RsgI7 (540 aa).

In terms of domain architecture, RsgI N-terminal anti-sigma spans 1-48 (MRAMVVDMNDKYAVVVNKEGQYIKIKRKAEHRLGYQVELPDRVIGFER). Topologically, residues 1-50 (MRAMVVDMNDKYAVVVNKEGQYIKIKRKAEHRLGYQVELPDRVIGFERRT) are cytoplasmic. Residues 51 to 73 (LLKVVSVAAALLIVSSISFAVYS) form a helical membrane-spanning segment. Residues 74–540 (YNLPYSYVNV…PGKEILKKRC (467 aa)) lie on the Extracellular side of the membrane. Composition is skewed to basic and acidic residues over residues 238 to 256 (DIKK…KKVN), 319 to 329 (SGIDKGNKDSK), 338 to 351 (NDVK…KTNS), 359 to 370 (VSKDNKNDKADG), and 398 to 419 (SKDD…EDNK). 2 disordered regions span residues 238–429 (DIKK…CPQY) and 481–540 (QEEQ…KKRC). Residues 451-501 (KEDMTKQNDEWFKKMQEEQKKQYDEWLKKMQEEQKKQHDEWVKKMEEMKNT) are a coiled coil.

Interacts (via RsgI N-terminal anti-sigma domain) with SigI7.

The protein localises to the cell membrane. Anti-sigma factor for SigI7. Negatively regulates SigI7 activity through direct interaction. This chain is Anti-sigma-I factor RsgI7, found in Acetivibrio thermocellus (strain ATCC 27405 / DSM 1237 / JCM 9322 / NBRC 103400 / NCIMB 10682 / NRRL B-4536 / VPI 7372) (Clostridium thermocellum).